A 278-amino-acid chain; its full sequence is 4-deoxy-L-threo-5-hexosulose-uronate ketol-isomerase (278 aa).

Zn(2+) contacts are provided by His-196, His-198, Glu-203, and His-245.

This sequence belongs to the KduI family. The cofactor is Zn(2+).

It carries out the reaction 5-dehydro-4-deoxy-D-glucuronate = 3-deoxy-D-glycero-2,5-hexodiulosonate. It participates in glycan metabolism; pectin degradation; 2-dehydro-3-deoxy-D-gluconate from pectin: step 4/5. Catalyzes the isomerization of 5-dehydro-4-deoxy-D-glucuronate to 3-deoxy-D-glycero-2,5-hexodiulosonate. The polypeptide is 4-deoxy-L-threo-5-hexosulose-uronate ketol-isomerase (Paraburkholderia phytofirmans (strain DSM 17436 / LMG 22146 / PsJN) (Burkholderia phytofirmans)).